The following is a 386-amino-acid chain: Succinate--CoA ligase [ADP-forming] subunit beta (386 aa).

Residues 9–244 (KEIFRKYGVP…LAEEEPREIQ (236 aa)) form the ATP-grasp domain. Residues K46, 53–55 (GRG), E99, L102, and E107 each bind ATP. The Mg(2+) site is built by N199 and D213. Residues N264 and 321-323 (GIM) each bind substrate.

This sequence belongs to the succinate/malate CoA ligase beta subunit family. Heterotetramer of two alpha and two beta subunits. Mg(2+) serves as cofactor.

It carries out the reaction succinate + ATP + CoA = succinyl-CoA + ADP + phosphate. It catalyses the reaction GTP + succinate + CoA = succinyl-CoA + GDP + phosphate. It functions in the pathway carbohydrate metabolism; tricarboxylic acid cycle; succinate from succinyl-CoA (ligase route): step 1/1. Its function is as follows. Succinyl-CoA synthetase functions in the citric acid cycle (TCA), coupling the hydrolysis of succinyl-CoA to the synthesis of either ATP or GTP and thus represents the only step of substrate-level phosphorylation in the TCA. The beta subunit provides nucleotide specificity of the enzyme and binds the substrate succinate, while the binding sites for coenzyme A and phosphate are found in the alpha subunit. The chain is Succinate--CoA ligase [ADP-forming] subunit beta from Myxococcus xanthus (strain DK1622).